A 397-amino-acid polypeptide reads, in one-letter code: Probable sugar efflux transporter (397 aa).

Helical transmembrane passes span 15–35, 51–71, 81–101, 103–123, 136–156, 170–190, 209–229, 246–266, 273–293, 301–321, 333–353, and 364–384; these read VVTL…PVGL, GIML…FMLL, LICL…AWSF, VLVI…SITA, AQAL…GLPV, FLAI…LLPL, PALM…YTAY, FATV…VIFG, ASVL…LLMP, LAIL…GMQV, VAMS…ALVG, and DIGY…VIIF.

It belongs to the major facilitator superfamily. SotB (TC 2.A.1.2) family.

The protein localises to the cell inner membrane. Involved in the efflux of sugars. The physiological role may be the reduction of the intracellular concentration of toxic sugars or sugar metabolites. The polypeptide is Probable sugar efflux transporter (Escherichia fergusonii (strain ATCC 35469 / DSM 13698 / CCUG 18766 / IAM 14443 / JCM 21226 / LMG 7866 / NBRC 102419 / NCTC 12128 / CDC 0568-73)).